Here is a 190-residue protein sequence, read N- to C-terminus: Protein E6C (190 aa).

Pro residues predominate over residues 1 to 15; sequence MFGVAKPPPSPIPKP. Disordered regions lie at residues 1 to 110 and 160 to 190; these read MFGV…EGRR and PRTPGPVAPIPELPGEADDPPTRTPPPPPDD. Positions 36–46 are enriched in basic residues; that stretch reads ARQRASTRHRP. 2 stretches are compositionally biased toward pro residues: residues 162 to 171 and 181 to 190; these read TPGPVAPIPE and TRTPPPPPDD.

The sequence is that of Protein E6C (13) from Equus caballus (Horse).